Consider the following 1325-residue polypeptide: ATP-binding cassette sub-family C member 4 (1325 aa).

An ABC transmembrane type-1 1 domain is found at 92–377; that stretch reads YLVLGIFTLI…FFPSAIERVS (286 aa). The next 7 helical transmembrane spans lie at 93–113, 136–156, 207–227, 228–248, 328–348, 351–371, and 440–460; these read LVLGIFTLIEESAKVIQPIFL, AYATVLTFCTLILAILHHLYF, QVTVFLHFLWAGPLQAIAVTA, LLWMEIGISCLAGMAVLIILL, SKIIVFVTFTTYVLLGSVITA, VFVAVTLYGAVRLTVTLFFPS, and LLAVVGPVGAGKSSLLSAVLG. An ABC transporter 1 domain is found at 410–633; it reads VHVQDFTAFW…GIDFGSLLKK (224 aa). 445–452 is a binding site for ATP; sequence GPVGAGKS. A phosphothreonine mark is found at Thr646 and Thr648. Low complexity predominate over residues 657–667; the sequence is SSVWSQQSSRP. Residues 657 to 688 form a disordered region; the sequence is SSVWSQQSSRPSLKDGALESQDTENVPVTLSE. Residues Ser664 and Ser668 each carry the phosphoserine modification. Residues 710–730 traverse the membrane as a helical segment; it reads HWIVFIFLILLNTAAQVAYVL. The 292-residue stretch at 714-1005 folds into the ABC transmembrane type-1 2 domain; sequence FIFLILLNTA…CVRQSAEVEN (292 aa). 2 N-linked (GlcNAc...) asparagine glycosylation sites follow: Asn746 and Asn754. Transmembrane regions (helical) follow at residues 771–791, 836–856, 858–878, 954–974, 977–997, and 1038–1058; these read LTVATVLFGIARSLLVFYVLV, LPLTFLDFIQTLLQVVGVVSV, VAVIPWIAIPLVPLGIIFIFL, AICAMFVIIVAFGSLILAKTL, GQVGLALSYALTLMGMFQWCV, and EGVIIFDNVNFMYSPGGPLVL. The ABC transporter 2 domain occupies 1041 to 1274; the sequence is IIFDNVNFMY…KESLFYKMVQ (234 aa). Residue 1075–1082 participates in ATP binding; sequence GRTGAGKS. The PDZ-binding signature appears at 1322–1325; it reads ETAL.

Belongs to the ABC transporter superfamily. ABCC family. Conjugate transporter (TC 3.A.1.208) subfamily. In terms of assembly, interacts (via PDZ-binding motif) with SNX27 (via PDZ domain); this interaction accelerates MRP4 internalization. Mg(2+) serves as cofactor. In terms of processing, N-glycosylated; leading to substrate-selective effects on its transport activity. Widely expressed, with particularly high levels in prostate, but is barely detectable in liver. sinusoidal membrane of hepatocytes.

The protein localises to the basolateral cell membrane. The protein resides in the apical cell membrane. It catalyses the reaction ATP + H2O + xenobioticSide 1 = ADP + phosphate + xenobioticSide 2.. The catalysed reaction is an S-substituted glutathione(in) + ATP + H2O = an S-substituted glutathione(out) + ADP + phosphate + H(+). It carries out the reaction 17beta-estradiol 17-O-(beta-D-glucuronate)(in) + ATP + H2O = 17beta-estradiol 17-O-(beta-D-glucuronate)(out) + ADP + phosphate + H(+). The enzyme catalyses dehydroepiandrosterone 3-sulfate(in) + ATP + H2O = dehydroepiandrosterone 3-sulfate(out) + ADP + phosphate + H(+). It catalyses the reaction leukotriene C4(in) + ATP + H2O = leukotriene C4(out) + ADP + phosphate + H(+). The catalysed reaction is leukotriene B4(in) + ATP + H2O = leukotriene B4(out) + ADP + phosphate + H(+). It carries out the reaction urate(in) + ATP + H2O = urate(out) + ADP + phosphate + H(+). The enzyme catalyses 3',5'-cyclic GMP(in) + ATP + H2O = 3',5'-cyclic GMP(out) + ADP + phosphate + H(+). It catalyses the reaction 3',5'-cyclic AMP(in) + ATP + H2O = 3',5'-cyclic AMP(out) + ADP + phosphate + H(+). The catalysed reaction is prostaglandin E2(in) + ATP + H2O = prostaglandin E2(out) + ADP + phosphate + H(+). It carries out the reaction prostaglandin E1(in) + ATP + H2O = prostaglandin E1(out) + ADP + phosphate + H(+). The enzyme catalyses glycodeoxycholate(in) + glutathione(in) + ATP + H2O = glycodeoxycholate(out) + glutathione(out) + ADP + phosphate + H(+). It catalyses the reaction cholate(in) + glutathione(in) + ATP + H2O = cholate(out) + glutathione(out) + ADP + phosphate + H(+). The catalysed reaction is glycocholate(in) + glutathione(in) + ATP + H2O = glycocholate(out) + glutathione(out) + ADP + phosphate + H(+). It carries out the reaction taurocholate(in) + glutathione(in) + ATP + H2O = taurocholate(out) + glutathione(out) + ADP + phosphate + H(+). The enzyme catalyses glycochenodeoxycholate(in) + glutathione(in) + ATP + H2O = glycochenodeoxycholate(out) + glutathione(out) + ADP + phosphate + H(+). It catalyses the reaction taurochenodeoxycholate(in) + glutathione(in) + ATP + H2O = taurochenodeoxycholate(out) + glutathione(out) + ADP + phosphate + H(+). The catalysed reaction is glycoursodeoxycholate(in) + glutathione(in) + ATP + H2O = glycoursodeoxycholate(out) + glutathione(out) + ADP + phosphate + H(+). It carries out the reaction tauroursodeoxycholate(in) + glutathione(in) + ATP + H2O = tauroursodeoxycholate(out) + glutathione(out) + ADP + phosphate + H(+). Its activity is regulated as follows. GSH stimulates the transport of MRP4. Urate inhibits methotrexate transport but stimulates cGMP transport. Nonsteroidal anti-inflammatory drugs (NSAIDs) strongly suppress the transport of MRP4 substrates. Its function is as follows. ATP-dependent transporter of the ATP-binding cassette (ABC) family that actively extrudes physiological compounds and xenobiotics from cells. Transports a range of endogenous molecules that have a key role in cellular communication and signaling, including cyclic nucleotides such as cyclic AMP (cAMP) and cyclic GMP (cGMP), bile acids, steroid conjugates, urate, and prostaglandins. Mediates the ATP-dependent efflux of glutathione conjugates such as leukotriene C4 (LTC4) and leukotriene B4 (LTB4) too. The presence of GSH is necessary for the ATP-dependent transport of LTB4, whereas GSH is not required for the transport of LTC4. Mediates the cotransport of bile acids with reduced glutathione (GSH). Transports a wide range of drugs and their metabolites, including anticancer, antiviral and antibiotics molecules. Confers resistance to anticancer agents such as methotrexate. This is ATP-binding cassette sub-family C member 4 (ABCC4) from Homo sapiens (Human).